The primary structure comprises 179 residues: Inosine/xanthosine triphosphatase (179 aa).

8-13 (TTNPAK) provides a ligand contact to substrate. Positions 38 and 68 each coordinate Mg(2+). 68 to 69 (EA) lines the substrate pocket.

Belongs to the YjjX NTPase family. In terms of assembly, homodimer. Mg(2+) serves as cofactor. It depends on Mn(2+) as a cofactor.

The enzyme catalyses XTP + H2O = XDP + phosphate + H(+). It catalyses the reaction ITP + H2O = IDP + phosphate + H(+). Functionally, phosphatase that hydrolyzes non-canonical purine nucleotides such as XTP and ITP to their respective diphosphate derivatives. Probably excludes non-canonical purines from DNA/RNA precursor pool, thus preventing their incorporation into DNA/RNA and avoiding chromosomal lesions. The polypeptide is Inosine/xanthosine triphosphatase (Proteus mirabilis (strain HI4320)).